The primary structure comprises 95 residues: Aspartyl/glutamyl-tRNA(Asn/Gln) amidotransferase subunit C (95 aa).

Belongs to the GatC family. As to quaternary structure, heterotrimer of A, B and C subunits.

The enzyme catalyses L-glutamyl-tRNA(Gln) + L-glutamine + ATP + H2O = L-glutaminyl-tRNA(Gln) + L-glutamate + ADP + phosphate + H(+). It catalyses the reaction L-aspartyl-tRNA(Asn) + L-glutamine + ATP + H2O = L-asparaginyl-tRNA(Asn) + L-glutamate + ADP + phosphate + 2 H(+). Its function is as follows. Allows the formation of correctly charged Asn-tRNA(Asn) or Gln-tRNA(Gln) through the transamidation of misacylated Asp-tRNA(Asn) or Glu-tRNA(Gln) in organisms which lack either or both of asparaginyl-tRNA or glutaminyl-tRNA synthetases. The reaction takes place in the presence of glutamine and ATP through an activated phospho-Asp-tRNA(Asn) or phospho-Glu-tRNA(Gln). The protein is Aspartyl/glutamyl-tRNA(Asn/Gln) amidotransferase subunit C of Pelagibacter ubique (strain HTCC1062).